A 367-amino-acid chain; its full sequence is Terpene cyclase verU1 (367 aa).

A helical membrane pass occupies residues 8–28 (IRCSLLLLGLVGIYTVWISSF). N-linked (GlcNAc...) asparagine glycosylation occurs at N50. 8 consecutive transmembrane segments (helical) span residues 57–77 (FTGI…YWPV), 85–105 (LSLI…LFAL), 120–140 (MAMF…PIYC), 169–189 (CLLG…PAVV), 197–217 (IIAL…LTHL), 239–259 (ISAM…SLLA), 292–312 (FQWD…GLHI), and 327–347 (LIPE…AALY). The N-linked (GlcNAc...) asparagine glycan is linked to N352.

This sequence belongs to the membrane-bound ascI terpene cyclase family.

The protein localises to the membrane. It participates in secondary metabolite biosynthesis; terpenoid biosynthesis. It functions in the pathway mycotoxin biosynthesis. Terpene cyclase; part of the gene cluster that mediates the biosynthesis of the neurotoxin verrucosidin, a methylated alpha-pyrone polyketide that inhibits oxidative phosphorylation in mitochondria and thereby causes neurological diseases. The carbon backbone of verrucosidin is synthesized by the HR-PKS verA, and further modified by the other verrucodidin cluster enzymes. The polypeptide is Terpene cyclase verU1 (Penicillium polonicum).